A 218-amino-acid polypeptide reads, in one-letter code: MQVHVIRRENRALYAGLLEKYFRIRHQIYVVERGWKELDRPDGREIDQFDTEDAVYLLGVDNDDIVAGMRMVPTTSPTLLSDVFPQLALAGPVRRPDAYELSRIFVVPRKRGEHGGPRAEAVIQAAAMEYGLSIGLSAFTIVLETWWLPRLVDQGWKAKPLGLPQDINGFSTTAVIVDVDDDAWVGICNRRSVPGPTLEWRGLEAIRRHSLPEFQVIS.

Belongs to the autoinducer synthase family.

It catalyses the reaction 4-coumaroyl-CoA + S-adenosyl-L-methionine = N-(4-coumaroyl)-L-homoserine lactone + S-methyl-5'-thioadenosine + CoA + H(+). Functionally, catalyzes the synthesis of 4-coumaroyl-homoserine lactone, a quorum-sensing (QS) autoinducer molecule which binds to RpaR transcriptional regulator to regulate expression of QS-dependent genes. In Rhodopseudomonas palustris (strain ATCC BAA-98 / CGA009), this protein is 4-coumaroyl-homoserine lactone synthase.